The following is a 644-amino-acid chain: Threonine--tRNA ligase (644 aa).

Positions 8–70 (VKAMVITLRD…EEDGELEILT (63 aa)) constitute a TGS domain. The tract at residues 251-541 (DHRKLGKELD…LTEHFAGAFP (291 aa)) is catalytic. Zn(2+)-binding residues include Cys-342, His-393, and His-518.

The protein belongs to the class-II aminoacyl-tRNA synthetase family. As to quaternary structure, homodimer. Zn(2+) is required as a cofactor.

The protein localises to the cytoplasm. It catalyses the reaction tRNA(Thr) + L-threonine + ATP = L-threonyl-tRNA(Thr) + AMP + diphosphate + H(+). In terms of biological role, catalyzes the attachment of threonine to tRNA(Thr) in a two-step reaction: L-threonine is first activated by ATP to form Thr-AMP and then transferred to the acceptor end of tRNA(Thr). Also edits incorrectly charged L-seryl-tRNA(Thr). This chain is Threonine--tRNA ligase, found in Caldanaerobacter subterraneus subsp. tengcongensis (strain DSM 15242 / JCM 11007 / NBRC 100824 / MB4) (Thermoanaerobacter tengcongensis).